Reading from the N-terminus, the 942-residue chain is Alanine--tRNA ligase (942 aa).

Zn(2+) is bound by residues His586, His590, Cys695, and His699.

The protein belongs to the class-II aminoacyl-tRNA synthetase family. The cofactor is Zn(2+).

It localises to the cytoplasm. The catalysed reaction is tRNA(Ala) + L-alanine + ATP = L-alanyl-tRNA(Ala) + AMP + diphosphate. In terms of biological role, catalyzes the attachment of alanine to tRNA(Ala) in a two-step reaction: alanine is first activated by ATP to form Ala-AMP and then transferred to the acceptor end of tRNA(Ala). Also edits incorrectly charged Ser-tRNA(Ala) and Gly-tRNA(Ala) via its editing domain. This is Alanine--tRNA ligase from Akkermansia muciniphila (strain ATCC BAA-835 / DSM 22959 / JCM 33894 / BCRC 81048 / CCUG 64013 / CIP 107961 / Muc).